We begin with the raw amino-acid sequence, 642 residues long: Chaperone protein DnaK (642 aa).

Thr-200 bears the Phosphothreonine; by autocatalysis mark. The segment covering 600–616 has biased composition (low complexity); it reads EAAQQSAGAAGPMPGAP. A disordered region spans residues 600-642; the sequence is EAAQQSAGAAGPMPGAPAEEEPSDGPRKAKGRVVDAEIVDDDK. Residues 623 to 634 show a composition bias toward basic and acidic residues; it reads DGPRKAKGRVVD.

It belongs to the heat shock protein 70 family.

Functionally, acts as a chaperone. This is Chaperone protein DnaK from Akkermansia muciniphila (strain ATCC BAA-835 / DSM 22959 / JCM 33894 / BCRC 81048 / CCUG 64013 / CIP 107961 / Muc).